The following is an 804-amino-acid chain: Cell surface sensor MSB2 (804 aa).

An N-terminal signal peptide occupies residues 1 to 20 (MHNFSKLAVAFVAAASFASA). Over 21–694 (EPETKAKVER…TNQSATQRGT (674 aa)) the chain is Extracellular. A glycan (N-linked (GlcNAc...) asparagine) is linked at Asn-45. Composition is skewed to low complexity over residues 46-58 (TTTP…SSTS) and 69-80 (SSFSSSASSSSA). Disordered regions lie at residues 46–90 (TTTP…RQPT) and 105–220 (TDST…ATSN). Residues 46 to 475 (TTTPASEASS…SVAPTSATSS (430 aa)) form a serine/threonine rich region (STR) region. Composition is skewed to polar residues over residues 81-90 (QELTASRQPT) and 109-126 (PFSQ…SATG). Low complexity-rich tracts occupy residues 128-143 (VTPI…PSTA) and 150-169 (SALT…SVTS). Asn-157 carries an N-linked (GlcNAc...) asparagine glycan. Over residues 170 to 188 (PGSTSGPAGTPESSSASDF) the composition is skewed to polar residues. The span at 189-202 (TSAVATSRASTATS) shows a compositional bias: low complexity. Asn-298, Asn-308, Asn-357, and Asn-393 each carry an N-linked (GlcNAc...) asparagine glycan. Polar residues predominate over residues 345–394 (VQTLPPVSTPTANGTVTSPPVDSQTTVLPTTTPGLSSDTIVTSPGVTANS). The tract at residues 345–516 (VQTLPPVSTP…APTVLPSDLP (172 aa)) is disordered. Composition is skewed to low complexity over residues 395–407 (TQVP…TIPT) and 427–476 (NNTV…TSSA). Asn-427 and Asn-433 each carry an N-linked (GlcNAc...) asparagine glycan. Residues 482-641 (WLPTTIIVQA…NGMLAHNLTM (160 aa)) are HKR11-MSB2 homology domain (HMH). Residues 493–508 (LPSTTGSSTNAPSSAP) show a composition bias toward polar residues. N-linked (GlcNAc...) asparagine glycans are attached at residues Asn-629, Asn-638, Asn-669, Asn-683, and Asn-686. A disordered region spans residues 658 to 689 (KPAGAGSGTGGNGSNGPNDVFNNDNNSTNQSA). Positions 660 to 671 (AGAGSGTGGNGS) are enriched in gly residues. Residues 672 to 686 (NGPNDVFNNDNNSTN) show a composition bias toward low complexity. The helical transmembrane segment at 695-715 (VAGIAFGAVSLAAAYGAAMFI) threads the bilayer. The Cytoplasmic segment spans residues 716-804 (VARRYKKKRQ…VAQENSLGWN (89 aa)). Disordered regions lie at residues 724 to 748 (RQAH…PALM) and 762 to 804 (GVMG…LGWN). Over residues 731–744 (SSVATPSEMRQSGS) the composition is skewed to polar residues. Residues 774 to 787 (GSNGSGRSAGNSAR) are compositionally biased toward low complexity.

The protein belongs to the HKR1/MSB2 family.

It localises to the cell membrane. The protein resides in the vacuole membrane. Functionally, MSB2 and SHO1 have overlapping functions in recognizing various surface signals for MAPK PMK1 activation and appressorium formation. While MSB2 is critical for sensing surface hydrophobicity and cutin monomers, SHO1 may play a more important role in recognizing rice leaf waxes. This Pyricularia oryzae (strain 70-15 / ATCC MYA-4617 / FGSC 8958) (Rice blast fungus) protein is Cell surface sensor MSB2.